Consider the following 147-residue polypeptide: Hemoglobin subunit gamma (147 aa).

Residues 3–147 (HFTAEEKAVI…VAIALAHKYH (145 aa)) form the Globin domain. Heme b-binding residues include His64 and His93.

Belongs to the globin family. As to quaternary structure, heterotetramer of two alpha chains and two gamma chains in fetal hemoglobin (Hb F). As to expression, red blood cells.

In terms of biological role, gamma chains make up the fetal hemoglobin F, in combination with alpha chains. This is Hemoglobin subunit gamma (HBG) from Eulemur fulvus fulvus (Brown lemur).